Reading from the N-terminus, the 284-residue chain is Acetyl-coenzyme A carboxylase carboxyl transferase subunit beta (284 aa).

Residues 25-284 (LWVKCPETGA…LCKILTKSVQ (260 aa)) enclose the CoA carboxyltransferase N-terminal domain.

It belongs to the AccD/PCCB family. As to quaternary structure, acetyl-CoA carboxylase is a heterohexamer composed of biotin carboxyl carrier protein (AccB), biotin carboxylase (AccC) and two subunits each of ACCase subunit alpha (AccA) and ACCase subunit beta (AccD).

The protein resides in the cytoplasm. The enzyme catalyses N(6)-carboxybiotinyl-L-lysyl-[protein] + acetyl-CoA = N(6)-biotinyl-L-lysyl-[protein] + malonyl-CoA. The protein operates within lipid metabolism; malonyl-CoA biosynthesis; malonyl-CoA from acetyl-CoA: step 1/1. Component of the acetyl coenzyme A carboxylase (ACC) complex. Biotin carboxylase (BC) catalyzes the carboxylation of biotin on its carrier protein (BCCP) and then the CO(2) group is transferred by the transcarboxylase to acetyl-CoA to form malonyl-CoA. This is Acetyl-coenzyme A carboxylase carboxyl transferase subunit beta from Liberibacter asiaticus (strain psy62).